We begin with the raw amino-acid sequence, 745 residues long: uncharacterized protein (745 aa).

In terms of domain architecture, HTH araC/xylS-type spans 158–256; that stretch reads NQVCDYIELH…HQTPKQYRGD (99 aa). DNA-binding regions (H-T-H motif) lie at residues 175-196 and 223-246; these read SELS…AESL and ITDI…KHFT.

This is an uncharacterized protein from Staphylococcus aureus (strain MRSA252).